We begin with the raw amino-acid sequence, 217 residues long: Ribonuclease HII (217 aa).

Residues 16–217 (YCIAGVDEVG…VARVLGTYHD (202 aa)) enclose the RNase H type-2 domain. A divalent metal cation-binding residues include Asp22, Glu23, and Asp114.

The protein belongs to the RNase HII family. Mn(2+) is required as a cofactor. Requires Mg(2+) as cofactor.

The protein localises to the cytoplasm. It carries out the reaction Endonucleolytic cleavage to 5'-phosphomonoester.. In terms of biological role, endonuclease that specifically degrades the RNA of RNA-DNA hybrids. This Colwellia psychrerythraea (strain 34H / ATCC BAA-681) (Vibrio psychroerythus) protein is Ribonuclease HII.